Reading from the N-terminus, the 488-residue chain is Sucrose phosphorylase (488 aa).

Sucrose-binding positions include Asp-50, His-88, 191–193 (RLD), Glu-233, 290–291 (HD), 341–344 (DLYQ), and Arg-398. The Nucleophile role is filled by Asp-193. The active-site Proton donor is the Glu-233.

The protein belongs to the glycosyl hydrolase 13 family. Sucrose phosphorylase subfamily.

The enzyme catalyses sucrose + phosphate = D-fructose + alpha-D-glucose 1-phosphate. The chain is Sucrose phosphorylase from Agrobacterium vitis (Rhizobium vitis).